The primary structure comprises 304 residues: 2-oxoacid:ferredoxin oxidoreductase 2, subunit beta (304 aa).

Cys12, Cys15, and Cys46 together coordinate [4Fe-4S] cluster. Thiamine diphosphate is bound by residues 44–47 (IGCS) and His65. Residue Asp90 participates in Mg(2+) binding. 91–92 (GD) provides a ligand contact to thiamine diphosphate. Residues Asn118 and Val120 each contribute to the Mg(2+) site. 122–123 (GL) contacts thiamine diphosphate. Cys197 is a binding site for [4Fe-4S] cluster.

In terms of assembly, heterodimer composed of an alpha and a beta subunit. Requires [4Fe-4S] cluster as cofactor. Thiamine diphosphate serves as cofactor. Mg(2+) is required as a cofactor.

It carries out the reaction a 2-oxocarboxylate + 2 oxidized [2Fe-2S]-[ferredoxin] + CoA = an acyl-CoA + 2 reduced [2Fe-2S]-[ferredoxin] + CO2 + H(+). Its function is as follows. Catalyzes the coenzyme A-dependent oxidative decarboxylation of different 2-oxoacids such as 2-oxoglutarate, pyruvate and 2-oxobutyrate to form their CoA derivatives. This chain is 2-oxoacid:ferredoxin oxidoreductase 2, subunit beta, found in Sulfurisphaera tokodaii (strain DSM 16993 / JCM 10545 / NBRC 100140 / 7) (Sulfolobus tokodaii).